Reading from the N-terminus, the 384-residue chain is Lipid-A-disaccharide synthase 1 (384 aa).

The protein belongs to the LpxB family.

It carries out the reaction a lipid X + a UDP-2-N,3-O-bis[(3R)-3-hydroxyacyl]-alpha-D-glucosamine = a lipid A disaccharide + UDP + H(+). Its pathway is bacterial outer membrane biogenesis; LPS lipid A biosynthesis. Its function is as follows. Condensation of UDP-2,3-diacylglucosamine and 2,3-diacylglucosamine-1-phosphate to form lipid A disaccharide, a precursor of lipid A, a phosphorylated glycolipid that anchors the lipopolysaccharide to the outer membrane of the cell. In Legionella pneumophila subsp. pneumophila (strain Philadelphia 1 / ATCC 33152 / DSM 7513), this protein is Lipid-A-disaccharide synthase 1.